Reading from the N-terminus, the 633-residue chain is tRNA uridine 5-carboxymethylaminomethyl modification enzyme MnmG (633 aa).

FAD-binding positions include 13–18 (GGGHAG), Val-125, and Ser-180. NAD(+) is bound at residue 273–287 (GPRYCPSIEDKITRF). Gln-370 is a binding site for FAD.

This sequence belongs to the MnmG family. In terms of assembly, homodimer. Heterotetramer of two MnmE and two MnmG subunits. FAD is required as a cofactor.

The protein resides in the cytoplasm. Functionally, NAD-binding protein involved in the addition of a carboxymethylaminomethyl (cmnm) group at the wobble position (U34) of certain tRNAs, forming tRNA-cmnm(5)s(2)U34. In Alteromonas mediterranea (strain DSM 17117 / CIP 110805 / LMG 28347 / Deep ecotype), this protein is tRNA uridine 5-carboxymethylaminomethyl modification enzyme MnmG.